A 221-amino-acid polypeptide reads, in one-letter code: Ribonuclease T (221 aa).

The Exonuclease domain occupies Val-20–Phe-196. Residues Asp-23, Glu-25, His-183, and Asp-188 each contribute to the Mg(2+) site. The active-site Proton donor/acceptor is the His-183.

The protein belongs to the RNase T family. In terms of assembly, homodimer. The cofactor is Mg(2+).

Trims short 3' overhangs of a variety of RNA species, leaving a one or two nucleotide 3' overhang. Responsible for the end-turnover of tRNA: specifically removes the terminal AMP residue from uncharged tRNA (tRNA-C-C-A). Also appears to be involved in tRNA biosynthesis. The polypeptide is Ribonuclease T (Chromohalobacter salexigens (strain ATCC BAA-138 / DSM 3043 / CIP 106854 / NCIMB 13768 / 1H11)).